Reading from the N-terminus, the 63-residue chain is uncharacterized protein (63 aa).

A helical transmembrane segment spans residues 38 to 58 (ISLFIILHLCLLVCLLLSFYF).

Its subcellular location is the membrane. This is an uncharacterized protein from Saccharomyces cerevisiae (strain ATCC 204508 / S288c) (Baker's yeast).